The sequence spans 117 residues: MEFGLSWVFLAGILKGVQCEVQLVESGGGLVQPGGSLRLSCAASGFTFSNSDMNWARKAPGKGLEWVSGVSWNGSRTHYVDSVKRRFIISRDNSRNSLYLQKNRRRAEDMAVYYCVR.

The N-terminal stretch at 1–19 (MEFGLSWVFLAGILKGVQC) is a signal peptide. A framework-1 region spans residues 20 to 44 (EVQLVESGGGLVQPGGSLRLSCAAS). Positions 21 to 117 (VQLVESGGGL…EDMAVYYCVR (97 aa)) constitute an Ig-like domain. A disulfide bond links cysteine 41 and cysteine 115. Residues 45-52 (GFTFSNSD) are complementarity-determining-1. Residues 53–69 (MNWARKAPGKGLEWVSG) are framework-2. The complementarity-determining-2 stretch occupies residues 70–77 (VSWNGSRT). Asparagine 73 carries an N-linked (GlcNAc...) asparagine glycan. The tract at residues 78 to 115 (HYVDSVKRRFIISRDNSRNSLYLQKNRRRAEDMAVYYC) is framework-3. The segment at 116–117 (VR) is complementarity-determining-3.

In terms of assembly, immunoglobulins are composed of two identical heavy chains and two identical light chains; disulfide-linked.

The protein localises to the secreted. It is found in the cell membrane. Its function is as follows. Probable non-functional open reading frame (ORF) of V region of the variable domain of immunoglobulin heavy chains. Non-functional ORF generally cannot participate in the synthesis of a productive immunoglobulin chain due to altered V-(D)-J or switch recombination and/or splicing site (at mRNA level) and/or conserved amino acid change (protein level). Immunoglobulins, also known as antibodies, are membrane-bound or secreted glycoproteins produced by B lymphocytes. In the recognition phase of humoral immunity, the membrane-bound immunoglobulins serve as receptors which, upon binding of a specific antigen, trigger the clonal expansion and differentiation of B lymphocytes into immunoglobulins-secreting plasma cells. Secreted immunoglobulins mediate the effector phase of humoral immunity, which results in the elimination of bound antigens. The antigen binding site is formed by the variable domain of one heavy chain, together with that of its associated light chain. Thus, each immunoglobulin has two antigen binding sites with remarkable affinity for a particular antigen. The variable domains are assembled by a process called V-(D)-J rearrangement and can then be subjected to somatic hypermutations which, after exposure to antigen and selection, allow affinity maturation for a particular antigen. This chain is Probable non-functional immunoglobulin heavy variable 3-16, found in Homo sapiens (Human).